A 390-amino-acid polypeptide reads, in one-letter code: Trehalose-phosphate phosphatase (390 aa).

The active-site Nucleophile is the aspartate 150. The Mg(2+) site is built by aspartate 150, aspartate 152, and aspartate 333. Position 150–152 (150–152) interacts with substrate; that stretch reads DFD.

Belongs to the trehalose phosphatase family. Mg(2+) serves as cofactor.

The catalysed reaction is alpha,alpha-trehalose 6-phosphate + H2O = alpha,alpha-trehalose + phosphate. It functions in the pathway glycan biosynthesis; trehalose biosynthesis. In terms of biological role, removes the phosphate from trehalose 6-phosphate to produce free trehalose. The polypeptide is Trehalose-phosphate phosphatase (otsB) (Mycobacterium marinum (strain ATCC BAA-535 / M)).